The primary structure comprises 103 residues: MDKSKRPFLKSKRSFRRRLPPIGSGDRIDYRNMSLISRFISEQGKILSRRVNRLTLKQQRLITIAIKQARILSSLPFLNNEKQFERTEFTARTTGSRTINLNK.

The protein belongs to the bacterial ribosomal protein bS18 family. In terms of assembly, part of the 30S ribosomal subunit.

It localises to the plastid. Its subcellular location is the chloroplast. The protein is Small ribosomal subunit protein bS18c of Buxus microphylla (Littleleaf boxwood).